The chain runs to 1441 residues: Protein clueless (1441 aa).

Disordered stretches follow at residues 1-79 and 106-131; these read MALD…EAAT and VAAN…ELES. The segment covering 8 to 22 has biased composition (polar residues); sequence KNSSSAATGDANTVK. Basic residues predominate over residues 54 to 63; it reads AKKKGKKNRN. Low complexity-rich tracts occupy residues 64–79 and 106–126; these read KSPP…EAAT and VAAN…AASS. Ser-273 is subject to Phosphoserine. The 243-residue stretch at 427–669 folds into the Clu domain; that stretch reads RAEDAFSSKL…RTFPPDVNFL (243 aa). Over residues 726–753 the composition is skewed to basic and acidic residues; it reads KKQDEAKEGTKEPASETEKESPPKAITE. 2 disordered regions span residues 726–769 and 961–1009; these read KKQD…GETK and EIHK…SGGT. The segment covering 964 to 977 has biased composition (basic residues); that stretch reads KKRTNTKYNKHKSS. The span at 978–1009 shows a compositional bias: low complexity; sequence KSSGSGSKQSGQTSNQNGTSTSPSSSTASGGT. 3 TPR repeats span residues 1109–1142, 1235–1268, and 1270–1303; these read AYNF…LNNV, ALID…NLKY, and GAKA…EKET.

Belongs to the CLU family.

The protein resides in the cytoplasm. Its function is as follows. mRNA-binding protein involved in proper cytoplasmic distribution of mitochondria. In Drosophila willistoni (Fruit fly), this protein is Protein clueless.